Here is a 290-residue protein sequence, read N- to C-terminus: 7-methylguanosine phosphate-specific 5'-nucleotidase A (290 aa).

Asp-39 acts as the Nucleophile in catalysis. 2 residues coordinate Mg(2+): Asp-39 and Asp-41. Residue Asp-41 is the Proton donor of the active site. Residue Glu-86 coordinates CMP. Residue Glu-86 coordinates N(7)-methyl-GMP. Substrate is bound by residues Ser-154–Ala-155 and Lys-203. Asp-228 provides a ligand contact to Mg(2+).

Belongs to the pyrimidine 5'-nucleotidase family. Monomer.

The protein localises to the cytoplasm. It catalyses the reaction N(7)-methyl-GMP + H2O = N(7)-methylguanosine + phosphate. The enzyme catalyses CMP + H2O = cytidine + phosphate. The catalysed reaction is a ribonucleoside 5'-phosphate + H2O = a ribonucleoside + phosphate. Functionally, specifically hydrolyzes 7-methylguanosine monophosphate (m(7)GMP) to 7-methylguanosine and inorganic phosphate. The specific activity for m(7)GMP may protect cells against undesired salvage of m(7)GMP and its incorporation into nucleic acids. Also has weak activity for CMP. UMP and purine nucleotides are poor substrates. This chain is 7-methylguanosine phosphate-specific 5'-nucleotidase A (Nt5c3b-a), found in Xenopus laevis (African clawed frog).